We begin with the raw amino-acid sequence, 513 residues long: ATP synthase subunit alpha (513 aa).

171–178 (GDRQIGKT) is an ATP binding site.

It belongs to the ATPase alpha/beta chains family. In terms of assembly, F-type ATPases have 2 components, CF(1) - the catalytic core - and CF(0) - the membrane proton channel. CF(1) has five subunits: alpha(3), beta(3), gamma(1), delta(1), epsilon(1). CF(0) has three main subunits: a(1), b(2) and c(9-12). The alpha and beta chains form an alternating ring which encloses part of the gamma chain. CF(1) is attached to CF(0) by a central stalk formed by the gamma and epsilon chains, while a peripheral stalk is formed by the delta and b chains.

Its subcellular location is the cell membrane. The enzyme catalyses ATP + H2O + 4 H(+)(in) = ADP + phosphate + 5 H(+)(out). Produces ATP from ADP in the presence of a proton gradient across the membrane. The alpha chain is a regulatory subunit. In Wolbachia pipientis wMel, this protein is ATP synthase subunit alpha.